Here is a 162-residue protein sequence, read N- to C-terminus: Universal stress protein MJ0577 (162 aa).

Residues P11, V41, 127-133 (GSHGKTN), and 141-143 (SVT) each bind ATP.

Belongs to the universal stress protein A family. Homodimer. It depends on Mn(2+) as a cofactor.

Its subcellular location is the cytoplasm. The chain is Universal stress protein MJ0577 from Methanocaldococcus jannaschii (strain ATCC 43067 / DSM 2661 / JAL-1 / JCM 10045 / NBRC 100440) (Methanococcus jannaschii).